A 48-amino-acid chain; its full sequence is Large ribosomal subunit protein uL14 (48 aa).

This sequence belongs to the universal ribosomal protein uL14 family.

This chain is Large ribosomal subunit protein uL14 (RPL23), found in Onchocerca volvulus.